Here is a 363-residue protein sequence, read N- to C-terminus: 4-hydroxy-2-oxovalerate aldolase 1 (363 aa).

The 253-residue stretch at 13–265 (VRMTDTSLRD…KTGIDFFDIA (253 aa)) folds into the Pyruvate carboxyltransferase domain. Substrate is bound at residue 21 to 22 (RD). Residue Asp-22 participates in Mn(2+) binding. His-25 (proton acceptor) is an active-site residue. Residues Ser-175 and His-204 each contribute to the substrate site. Positions 204 and 206 each coordinate Mn(2+). Residue Tyr-295 participates in substrate binding.

The protein belongs to the 4-hydroxy-2-oxovalerate aldolase family.

It carries out the reaction (S)-4-hydroxy-2-oxopentanoate = acetaldehyde + pyruvate. This chain is 4-hydroxy-2-oxovalerate aldolase 1, found in Mycobacterium sp. (strain JLS).